We begin with the raw amino-acid sequence, 388 residues long: Probable ubiquitin-conjugating enzyme E2 L709 (388 aa).

The UBC core domain maps to 3-162 (NVHKRVIKDI…GNDLMVQKLF (160 aa)). Residue Cys95 is the Glycyl thioester intermediate of the active site. The tract at residues 195-388 (VEEKSAKTSK…SSKSSKTGKK (194 aa)) is disordered. 2 stretches are compositionally biased toward acidic residues: residues 221-238 (SEEE…DSES) and 246-297 (DVVD…ESEE). The span at 310-388 (KTTTKSSSTK…SSKSSKTGKK (79 aa)) shows a compositional bias: low complexity.

This sequence belongs to the ubiquitin-conjugating enzyme family.

It catalyses the reaction S-ubiquitinyl-[E1 ubiquitin-activating enzyme]-L-cysteine + [E2 ubiquitin-conjugating enzyme]-L-cysteine = [E1 ubiquitin-activating enzyme]-L-cysteine + S-ubiquitinyl-[E2 ubiquitin-conjugating enzyme]-L-cysteine.. It participates in protein modification; protein ubiquitination. Catalyzes the covalent attachment of ubiquitin to other proteins. The sequence is that of Probable ubiquitin-conjugating enzyme E2 L709 from Acanthamoeba polyphaga (Amoeba).